The sequence spans 418 residues: Glutamyl-tRNA reductase (418 aa).

Substrate is bound by residues 49–52, Ser105, 110–112, and Gln116; these read TCNR and EPQ. The active-site Nucleophile is the Cys50. 185-190 contacts NADP(+); that stretch reads GAGEMI.

This sequence belongs to the glutamyl-tRNA reductase family. In terms of assembly, homodimer.

The enzyme catalyses (S)-4-amino-5-oxopentanoate + tRNA(Glu) + NADP(+) = L-glutamyl-tRNA(Glu) + NADPH + H(+). It participates in porphyrin-containing compound metabolism; protoporphyrin-IX biosynthesis; 5-aminolevulinate from L-glutamyl-tRNA(Glu): step 1/2. Functionally, catalyzes the NADPH-dependent reduction of glutamyl-tRNA(Glu) to glutamate 1-semialdehyde (GSA). In Aromatoleum aromaticum (strain DSM 19018 / LMG 30748 / EbN1) (Azoarcus sp. (strain EbN1)), this protein is Glutamyl-tRNA reductase.